The primary structure comprises 84 residues: Putative membrane protein insertion efficiency factor (84 aa).

This sequence belongs to the UPF0161 family.

Its subcellular location is the cell inner membrane. Its function is as follows. Could be involved in insertion of integral membrane proteins into the membrane. In Shewanella loihica (strain ATCC BAA-1088 / PV-4), this protein is Putative membrane protein insertion efficiency factor.